A 690-amino-acid chain; its full sequence is Glycine--tRNA ligase beta subunit (690 aa).

The protein belongs to the class-II aminoacyl-tRNA synthetase family. In terms of assembly, tetramer of two alpha and two beta subunits.

The protein localises to the cytoplasm. The catalysed reaction is tRNA(Gly) + glycine + ATP = glycyl-tRNA(Gly) + AMP + diphosphate. In Lactobacillus gasseri (strain ATCC 33323 / DSM 20243 / BCRC 14619 / CIP 102991 / JCM 1131 / KCTC 3163 / NCIMB 11718 / NCTC 13722 / AM63), this protein is Glycine--tRNA ligase beta subunit.